Reading from the N-terminus, the 94-residue chain is Large ribosomal subunit protein bL28A (94 aa).

Residues 63–94 (GHRGRRRAARAGSAPAHFARQAGSSLRTAAIL) form a disordered region. The span at 72-82 (RAGSAPAHFAR) shows a compositional bias: low complexity. Residues 84 to 94 (AGSSLRTAAIL) show a composition bias toward polar residues.

Belongs to the bacterial ribosomal protein bL28 family.

This Mycobacterium bovis (strain ATCC BAA-935 / AF2122/97) protein is Large ribosomal subunit protein bL28A (rpmB1).